Consider the following 199-residue polypeptide: TATA-box-binding protein (199 aa).

2 tandem repeats follow at residues 10–86 and 101–177.

This sequence belongs to the TBP family.

Functionally, general factor that plays a role in the activation of archaeal genes transcribed by RNA polymerase. Binds specifically to the TATA box promoter element which lies close to the position of transcription initiation. The polypeptide is TATA-box-binding protein (Pyrobaculum aerophilum (strain ATCC 51768 / DSM 7523 / JCM 9630 / CIP 104966 / NBRC 100827 / IM2)).